A 504-amino-acid polypeptide reads, in one-letter code: Taurochenodeoxycholic 6 alpha-hydroxylase (504 aa).

2 helical membrane passes run Leu-6–Leu-26 and Ala-110–Gly-130. Cys-451 contacts heme.

The protein belongs to the cytochrome P450 family. Requires heme as cofactor. Primarily expressed in liver. Low expression in kidney.

Its subcellular location is the endoplasmic reticulum membrane. It catalyses the reaction taurochenodeoxycholate + reduced [NADPH--hemoprotein reductase] + O2 = taurohyocholate + oxidized [NADPH--hemoprotein reductase] + H2O + H(+). The enzyme catalyses lithocholate + reduced [NADPH--hemoprotein reductase] + O2 = hyodeoxycholate + oxidized [NADPH--hemoprotein reductase] + H2O + H(+). In terms of biological role, catalyzes the 6 alpha hydroxylation oxidation of taurodeoxycholate to produce the pig specific bile acid taurohyocholic acid. In Sus scrofa (Pig), this protein is Taurochenodeoxycholic 6 alpha-hydroxylase (CYP4A21).